The sequence spans 193 residues: Probable DNA-directed RNA polymerase subunit delta (193 aa).

In terms of domain architecture, HTH HARE-type spans 14-83 (LSMIEVARAI…GDNKWGLRSW (70 aa)). Acidic residues-rich tracts occupy residues 119-133 (EDAI…EDEN) and 143-193 (YDND…ETND). Residues 119-193 (EDAIDYNDDD…DDDYEDETND (75 aa)) are disordered.

The protein belongs to the RpoE family. RNAP is composed of a core of 2 alpha, a beta and a beta' subunits. The core is associated with a delta subunit and one of several sigma factors.

In terms of biological role, participates in both the initiation and recycling phases of transcription. In the presence of the delta subunit, RNAP displays an increased specificity of transcription, a decreased affinity for nucleic acids, and an increased efficiency of RNA synthesis because of enhanced recycling. The chain is Probable DNA-directed RNA polymerase subunit delta from Streptococcus thermophilus (strain CNRZ 1066).